The primary structure comprises 526 residues: Peptide chain release factor 3 (526 aa).

The tr-type G domain maps to 9–277 (DKRRTFAIIS…GIVEWAPKPL (269 aa)). Residues 18–25 (SHPDAGKT), 86–90 (DTPGH), and 140–143 (NKLD) each bind GTP.

This sequence belongs to the TRAFAC class translation factor GTPase superfamily. Classic translation factor GTPase family. PrfC subfamily.

The protein localises to the cytoplasm. Functionally, increases the formation of ribosomal termination complexes and stimulates activities of RF-1 and RF-2. It binds guanine nucleotides and has strong preference for UGA stop codons. It may interact directly with the ribosome. The stimulation of RF-1 and RF-2 is significantly reduced by GTP and GDP, but not by GMP. The polypeptide is Peptide chain release factor 3 (Shewanella baltica (strain OS223)).